The chain runs to 42 residues: Thymosin beta-10 (42 aa).

2 stretches are compositionally biased toward basic and acidic residues: residues 1-25 (MADKPDMGEINSFDKAKLKKTETQE) and 33-42 (ETIEQEKQAK). The disordered stretch occupies residues 1 to 42 (MADKPDMGEINSFDKAKLKKTETQEKNTLPTKETIEQEKQAK). Alanine 2 carries the post-translational modification N-acetylalanine. Lysine 4 bears the N6-acetyllysine mark. At serine 12 the chain carries Phosphoserine. At lysine 15 the chain carries N6-acetyllysine. Phosphothreonine is present on residues threonine 21, threonine 23, and threonine 34. Lysine 39 bears the N6-acetyllysine mark.

Belongs to the thymosin beta family.

It localises to the cytoplasm. The protein localises to the cytoskeleton. Functionally, plays an important role in the organization of the cytoskeleton. Binds to and sequesters actin monomers (G actin) and therefore inhibits actin polymerization. This chain is Thymosin beta-10 (TMSB10), found in Sus scrofa (Pig).